A 342-amino-acid polypeptide reads, in one-letter code: 6-hydroxytryprostatin B O-methyltransferase (342 aa).

Position 201 (aspartate 201) interacts with S-adenosyl-L-methionine. Histidine 244 functions as the Proton acceptor in the catalytic mechanism.

Belongs to the class I-like SAM-binding methyltransferase superfamily. Cation-independent O-methyltransferase family. As to quaternary structure, homodimer.

The catalysed reaction is 6-hydroxytryprostatin B + S-adenosyl-L-methionine = tryprostatin A + S-adenosyl-L-homocysteine + H(+). It participates in alkaloid biosynthesis. Its function is as follows. 6-hydroxytryprostatin B O-methyltransferase; part of the gene cluster that mediates the biosynthesis of fumitremorgins, indole alkaloids that carry not only intriguing chemical structures, but also interesting biological and pharmacological activities. The biosynthesis of fumitremorgin-type alkaloids begins by condensation of the two amino acids L-tryptophan and L-proline to brevianamide F, catalyzed by the non-ribosomal peptide synthetase ftmA. Brevianamide F is then prenylated by the prenyltransferase ftmPT1/ftmB in the presence of dimethylallyl diphosphate, resulting in the formation of tryprostatin B. The three cytochrome P450 monooxygenases, ftmP450-1/ftmC, ftmP450-2/ftmE and ftmP450-3/FtmG, are responsible for the conversion of tryprostatin B to 6-hydroxytryprostatin B, tryprostatin A to fumitremorgin C and fumitremorgin C to 12,13-dihydroxyfumitremorgin C, respectively. The putative methyltransferase ftmMT/ftmD is expected for the conversion of 6-hydroxytryprostatin B to tryprostatin A. FtmPT2/FtmH catalyzes the prenylation of 12,13-dihydroxyfumitre-morgin C in the presence of dimethylallyl diphosphate, resulting in the formation of fumitremorgin B. Fumitremorgin B is further converted to verruculogen by ftmOx1/ftmF via the insertion of an endoperoxide bond between the two prenyl moieties. In some fungal species, verruculogen is further converted to fumitremorgin A, but the enzymes involved in this step have not been identified yet. In Aspergillus fumigatus (Neosartorya fumigata), this protein is 6-hydroxytryprostatin B O-methyltransferase.